Here is a 177-residue protein sequence, read N- to C-terminus: ATP synthase subunit delta (177 aa).

This sequence belongs to the ATPase delta chain family. As to quaternary structure, F-type ATPases have 2 components, F(1) - the catalytic core - and F(0) - the membrane proton channel. F(1) has five subunits: alpha(3), beta(3), gamma(1), delta(1), epsilon(1). F(0) has three main subunits: a(1), b(2) and c(10-14). The alpha and beta chains form an alternating ring which encloses part of the gamma chain. F(1) is attached to F(0) by a central stalk formed by the gamma and epsilon chains, while a peripheral stalk is formed by the delta and b chains.

The protein resides in the cell inner membrane. F(1)F(0) ATP synthase produces ATP from ADP in the presence of a proton or sodium gradient. F-type ATPases consist of two structural domains, F(1) containing the extramembraneous catalytic core and F(0) containing the membrane proton channel, linked together by a central stalk and a peripheral stalk. During catalysis, ATP synthesis in the catalytic domain of F(1) is coupled via a rotary mechanism of the central stalk subunits to proton translocation. Its function is as follows. This protein is part of the stalk that links CF(0) to CF(1). It either transmits conformational changes from CF(0) to CF(1) or is implicated in proton conduction. In Proteus mirabilis (strain HI4320), this protein is ATP synthase subunit delta.